Here is a 228-residue protein sequence, read N- to C-terminus: DNA-binding response regulator MtrA (228 aa).

A Response regulatory domain is found at 7–120 (RILVVDDDAS…ELVARVRARL (114 aa)). The residue at position 56 (D56) is a 4-aspartylphosphate. Residues 128 to 227 (AEMLSIADVE…VRGVGYKAGP (100 aa)) constitute a DNA-binding region (ompR/PhoB-type).

Post-translationally, phosphorylated by MtrB.

Functionally, member of the two-component regulatory system MtrA/MtrB. The chain is DNA-binding response regulator MtrA (mtrA) from Mycobacterium bovis (strain ATCC BAA-935 / AF2122/97).